The following is a 370-amino-acid chain: 3-isopropylmalate dehydrogenase (370 aa).

NAD(+) is bound at residue 77-90 (GPKWDSVPYEVRPE). Substrate contacts are provided by Arg97, Arg107, Arg135, and Asp226. Mg(2+) is bound by residues Asp226, Asp250, and Asp254. 290 to 302 (GSAPDIAGKGIAN) is a binding site for NAD(+).

This sequence belongs to the isocitrate and isopropylmalate dehydrogenases family. LeuB type 1 subfamily. In terms of assembly, homodimer. It depends on Mg(2+) as a cofactor. The cofactor is Mn(2+).

It is found in the cytoplasm. It carries out the reaction (2R,3S)-3-isopropylmalate + NAD(+) = 4-methyl-2-oxopentanoate + CO2 + NADH. The protein operates within amino-acid biosynthesis; L-leucine biosynthesis; L-leucine from 3-methyl-2-oxobutanoate: step 3/4. Functionally, catalyzes the oxidation of 3-carboxy-2-hydroxy-4-methylpentanoate (3-isopropylmalate) to 3-carboxy-4-methyl-2-oxopentanoate. The product decarboxylates to 4-methyl-2 oxopentanoate. This chain is 3-isopropylmalate dehydrogenase, found in Brucella melitensis biotype 1 (strain ATCC 23456 / CCUG 17765 / NCTC 10094 / 16M).